Here is a 128-residue protein sequence, read N- to C-terminus: UPF0102 protein MAV_3752 (128 aa).

The protein belongs to the UPF0102 family.

This is UPF0102 protein MAV_3752 from Mycobacterium avium (strain 104).